Here is a 261-residue protein sequence, read N- to C-terminus: Ribosomal RNA small subunit methyltransferase J (261 aa).

Residues 109 to 110, 125 to 126, and aspartate 179 contribute to the S-adenosyl-L-methionine site; these read RD and ER.

This sequence belongs to the methyltransferase superfamily. RsmJ family.

It localises to the cytoplasm. It catalyses the reaction guanosine(1516) in 16S rRNA + S-adenosyl-L-methionine = N(2)-methylguanosine(1516) in 16S rRNA + S-adenosyl-L-homocysteine + H(+). Functionally, specifically methylates the guanosine in position 1516 of 16S rRNA. The polypeptide is Ribosomal RNA small subunit methyltransferase J (Pseudomonas aeruginosa (strain UCBPP-PA14)).